The following is a 304-amino-acid chain: HTH-type transcriptional regulator AdmX (304 aa).

The HTH lysR-type domain occupies 1-58 (MKLRHLEIFYTVMTCGSLSRAAESLNISQPAASKSLKNAELKLGFKLFQRVRGKLLPS). The H-T-H motif DNA-binding region spans 18–37 (LSRAAESLNISQPAASKSLK).

The protein belongs to the LysR transcriptional regulatory family.

The protein localises to the cytoplasm. With respect to regulation, admX-mediated transcription is inhibited by indole-3-acetic and indole-3-pyruvic acids. AdmX recognizes and binds the auxin indole-3-acetic acid (IAA), which causes conformational changes in AdmX that result in the inhibition of the expression of the andrimid gene cluster and the suppression of antibiotic production. It also recognizes indole-3-pyruvic acid (IPA), an intermediate of the main IAA biosynthetic pathway in plants and plant beneficial bacteria, which also prevents andrimid synthesis, but to a much lesser extent. Its function is as follows. Positively regulates the biosynthesis of andrimid, a broad-spectrum antibiotic, by activating the expression of the adm biosynthetic gene cluster. It specifically binds to a region within the adm promoter. The sequence is that of HTH-type transcriptional regulator AdmX from Serratia plymuthica.